A 552-amino-acid polypeptide reads, in one-letter code: Membrane protein insertase YidC (552 aa).

Transmembrane regions (helical) follow at residues 7–24 (VLWVIFFMSAVMLYDNWQ), 364–384 (WGWAIVLLTVLIKAVFFPLSA), 434–454 (LPVVIQIPVFISLYWVLLASV), 473–493 (PFFILPVLMAVSMFVQTSLNP), and 508–528 (PIAFSVMFFFFPAGLVLYYVV).

It belongs to the OXA1/ALB3/YidC family. Type 1 subfamily. In terms of assembly, interacts with the Sec translocase complex via SecD. Specifically interacts with transmembrane segments of nascent integral membrane proteins during membrane integration.

It is found in the cell inner membrane. Functionally, required for the insertion and/or proper folding and/or complex formation of integral membrane proteins into the membrane. Involved in integration of membrane proteins that insert both dependently and independently of the Sec translocase complex, as well as at least some lipoproteins. Aids folding of multispanning membrane proteins. This is Membrane protein insertase YidC from Burkholderia cenocepacia (strain HI2424).